Reading from the N-terminus, the 316-residue chain is Olfactory receptor 56B2 (316 aa).

Residues M1 to H32 lie on the Extracellular side of the membrane. N-linked (GlcNAc...) asparagine glycosylation is present at N10. A helical transmembrane segment spans residues W33–L53. At I54–A61 the chain is on the cytoplasmic side. A helical transmembrane segment spans residues L62–T82. Residues T83–A106 lie on the Extracellular side of the membrane. C104 and C196 form a disulfide bridge. A helical membrane pass occupies residues Q107–I127. The Cytoplasmic segment spans residues D128 to S146. Residues F147–P167 traverse the membrane as a helical segment. Topologically, residues L168–S203 are extracellular. Residues I204–S224 traverse the membrane as a helical segment. At Y225–A244 the chain is on the cytoplasmic side. The helical transmembrane segment at L245–I265 threads the bilayer. The Extracellular portion of the chain corresponds to S266–P279. The chain crosses the membrane as a helical span at residues V280 to L300. Residues K301 to E316 lie on the Cytoplasmic side of the membrane.

Belongs to the G-protein coupled receptor 1 family.

It is found in the cell membrane. Its function is as follows. Odorant receptor. The chain is Olfactory receptor 56B2 from Homo sapiens (Human).